We begin with the raw amino-acid sequence, 460 residues long: Chromosomal replication initiator protein DnaA 2 (460 aa).

A domain I, interacts with DnaA modulators region spans residues 1–68 (MRAWEDFLLL…KTSLVNNNGK (68 aa)). The segment at 68 to 102 (KLIRVHITSLDKTAPFYKEKQIQQEKTAYFTMQYG) is domain II. Positions 103–321 (NVNPEMTFGN…DALKLLSKRV (219 aa)) are domain III, AAA+ region. Gly-151, Gly-153, Lys-154, and Thr-155 together coordinate ATP. The interval 322-460 (AYKKLAQQLL…EFFPEEEISC (139 aa)) is domain IV, binds dsDNA.

Belongs to the DnaA family. As to quaternary structure, oligomerizes as a right-handed, spiral filament on DNA at oriC.

The protein resides in the cytoplasm. Its function is as follows. Plays an essential role in the initiation and regulation of chromosomal replication. ATP-DnaA binds to the origin of replication (oriC) to initiate formation of the DNA replication initiation complex once per cell cycle. Binds the DnaA box (a 9 base pair repeat at the origin) and separates the double-stranded (ds)DNA. Forms a right-handed helical filament on oriC DNA; dsDNA binds to the exterior of the filament while single-stranded (ss)DNA is stabiized in the filament's interior. The ATP-DnaA-oriC complex binds and stabilizes one strand of the AT-rich DNA unwinding element (DUE), permitting loading of DNA polymerase. After initiation quickly degrades to an ADP-DnaA complex that is not apt for DNA replication. Binds acidic phospholipids. The protein is Chromosomal replication initiator protein DnaA 2 of Chlamydia caviae (strain ATCC VR-813 / DSM 19441 / 03DC25 / GPIC) (Chlamydophila caviae).